A 449-amino-acid polypeptide reads, in one-letter code: MEHIQTRTTLSQLSTLPSDKRLGAIRFKCLLVMKVEMINRIAGVFARRGYNIESLAVGLNKDKALFTIVVSGTERVLQQVMEQLQKLVNVIKVEDLSKEPQVERELMLIKISADPKYRAEVMWLVDVFRAKIVDISDQSLTIEVTGDPGKMVAVQRNLSKFGIREIARTGKIALRREKMGESAPFWRFSAASYPDLEGAMSAGTISRTIKRTPNGESMSMAEGDVYPVETDDNSGVSQVLDAHWGVLNDEDTSGLRSHTLSMLVNDTPGVLNIVTGVFARRGYNIQSLAVGHAEVEGLSRITTVVPGTDESVSKLVQQLYKLVDIHEVRDITHLPFAERELMLIKIAVNAAARRNVLDIASIFRAKAVDVSDHTITLELTGDLHKMVRLQRLLEPYGICEVARTDVWHWYVNQVWIRSTCEDIHTLCSLKSSNLRKIPALCGMCANVDD.

The transit peptide at Met-1–Leu-30 directs the protein to the chloroplast. ACT domains are found at residues Leu-31 to Lys-98 and Thr-259 to His-333.

The protein belongs to the acetolactate synthase small subunit family. As to quaternary structure, the acetolactate synthase complex contains both large catalytic subunits and small regulatory subunits.

It is found in the plastid. The protein localises to the chloroplast. It functions in the pathway amino-acid biosynthesis; L-isoleucine biosynthesis; L-isoleucine from 2-oxobutanoate: step 1/4. It participates in amino-acid biosynthesis; L-valine biosynthesis; L-valine from pyruvate: step 1/4. In terms of biological role, regulatory subunit of acetohydroxy-acid synthase. Probably involved in feedback inhibition by branched-chain amino acids. Not involved in herbicide tolerance. In Nicotiana plumbaginifolia (Leadwort-leaved tobacco), this protein is Acetolactate synthase small subunit 1, chloroplastic.